A 319-amino-acid polypeptide reads, in one-letter code: Beta-ketoacyl-[acyl-carrier-protein] synthase III (319 aa).

Residues cysteine 112 and histidine 246 contribute to the active site. The tract at residues 247–251 (QANFR) is ACP-binding. Asparagine 276 is an active-site residue.

Belongs to the thiolase-like superfamily. FabH family. Homodimer.

The protein resides in the cytoplasm. It carries out the reaction malonyl-[ACP] + acetyl-CoA + H(+) = 3-oxobutanoyl-[ACP] + CO2 + CoA. It participates in lipid metabolism; fatty acid biosynthesis. Its function is as follows. Catalyzes the condensation reaction of fatty acid synthesis by the addition to an acyl acceptor of two carbons from malonyl-ACP. Catalyzes the first condensation reaction which initiates fatty acid synthesis and may therefore play a role in governing the total rate of fatty acid production. Possesses both acetoacetyl-ACP synthase and acetyl transacylase activities. Its substrate specificity determines the biosynthesis of branched-chain and/or straight-chain of fatty acids. The protein is Beta-ketoacyl-[acyl-carrier-protein] synthase III of Pseudoalteromonas atlantica (strain T6c / ATCC BAA-1087).